The chain runs to 839 residues: Heat shock 70 kDa protein 4L (839 aa).

Phosphoserine occurs at positions 74 and 508. The segment covering 503 to 554 (LEGDHSDAPMETETSFKNENKDNMDKMQVDQEEGHQKCHAEHTPEEEIDHTG) has biased composition (basic and acidic residues). The tract at residues 503–567 (LEGDHSDAPM…KSAVSDKQDR (65 aa)) is disordered. Phosphothreonine is present on Thr-545. At Ser-579 the chain carries Phosphoserine. Phosphothreonine is present on Thr-761. A disordered region spans residues 786–839 (IYKPKPKAEVPEDKPKANSEHNGPMDGQSGTETKSDSTKDSSQHTKSSGEMEVD). Composition is skewed to basic and acidic residues over residues 791-804 (PKAE…KANS) and 818-839 (TKSD…MEVD).

The protein belongs to the heat shock protein 70 family. In terms of assembly, homodimer.

The protein resides in the cytoplasm. Its subcellular location is the nucleus. Its function is as follows. Possesses chaperone activity in vitro where it inhibits aggregation of citrate synthase. The polypeptide is Heat shock 70 kDa protein 4L (HSPA4L) (Homo sapiens (Human)).